Here is a 327-residue protein sequence, read N- to C-terminus: Phenylalanine--tRNA ligase alpha subunit (327 aa).

Glutamate 252 lines the Mg(2+) pocket.

This sequence belongs to the class-II aminoacyl-tRNA synthetase family. Phe-tRNA synthetase alpha subunit type 1 subfamily. As to quaternary structure, tetramer of two alpha and two beta subunits. It depends on Mg(2+) as a cofactor.

It is found in the cytoplasm. The enzyme catalyses tRNA(Phe) + L-phenylalanine + ATP = L-phenylalanyl-tRNA(Phe) + AMP + diphosphate + H(+). The sequence is that of Phenylalanine--tRNA ligase alpha subunit from Haemophilus ducreyi (strain 35000HP / ATCC 700724).